The following is a 279-amino-acid chain: 3-methyl-2-oxobutanoate hydroxymethyltransferase (279 aa).

Residues Asp43 and Asp82 each contribute to the Mg(2+) site. 3-methyl-2-oxobutanoate-binding positions include 43 to 44 (DS), Asp82, and Lys112. Glu114 is a Mg(2+) binding site. Glu181 serves as the catalytic Proton acceptor.

Belongs to the PanB family. Homodecamer; pentamer of dimers. Mg(2+) is required as a cofactor.

It is found in the cytoplasm. The catalysed reaction is 3-methyl-2-oxobutanoate + (6R)-5,10-methylene-5,6,7,8-tetrahydrofolate + H2O = 2-dehydropantoate + (6S)-5,6,7,8-tetrahydrofolate. It participates in cofactor biosynthesis; (R)-pantothenate biosynthesis; (R)-pantoate from 3-methyl-2-oxobutanoate: step 1/2. Catalyzes the reversible reaction in which hydroxymethyl group from 5,10-methylenetetrahydrofolate is transferred onto alpha-ketoisovalerate to form ketopantoate. The polypeptide is 3-methyl-2-oxobutanoate hydroxymethyltransferase (Exiguobacterium sibiricum (strain DSM 17290 / CCUG 55495 / CIP 109462 / JCM 13490 / 255-15)).